A 476-amino-acid polypeptide reads, in one-letter code: Transmembrane transporter FPSE_08127 (476 aa).

Residues 72 to 92 form a helical membrane-spanning segment; it reads ILAIPAALGALGSIGGSLCII. Asn-111 carries an N-linked (GlcNAc...) asparagine glycan. 9 consecutive transmembrane segments (helical) span residues 133–153, 164–184, 192–212, 231–251, 275–295, 317–337, 364–384, 387–407, and 431–451; these read LVGV…VVAI, GTCT…FSAI, WLTW…VVAV, WAPI…NIFI, ACLV…LVIY, VAYG…QHVA, LGIN…VPIL, LLGL…PALL, and LIMM…VVLI.

This sequence belongs to the amino acid/polyamine transporter 2 family.

The protein localises to the membrane. Its function is as follows. Transmembrane transporter; part of the Fusarium detoxification of benzoxazolinone cluster involved in the degradation of benzoxazolinones produced by the host plant. Maize, wheat, and rye produce the 2 benzoxazinone phytoanticipins 2,4-dihy-droxy-7-methoxy-1,4-benzoxazin-3-one (DIMBOA) and 2,4-dihydroxy-1,4-benzoxazin-3-one (DIBOA) that, due to their inherent instability once released, spontaneously degrade to the more stable corresponding benzoxazolinones, 6-methoxy-2-benzoxazolinone (MBOA) and 2-benzoxazolinone (BOA), respectively. FPSE_08127 is proposed to shuttle metabolites of benzoxazolinone degradation. The chain is Transmembrane transporter FPSE_08127 from Fusarium pseudograminearum (strain CS3096) (Wheat and barley crown-rot fungus).